A 263-amino-acid polypeptide reads, in one-letter code: 5'-nucleotidase SurE (263 aa).

4 residues coordinate a divalent metal cation: Asp11, Asp12, Ser42, and Asn96.

The protein belongs to the SurE nucleotidase family. Requires a divalent metal cation as cofactor.

The protein localises to the cytoplasm. It catalyses the reaction a ribonucleoside 5'-phosphate + H2O = a ribonucleoside + phosphate. Nucleotidase that shows phosphatase activity on nucleoside 5'-monophosphates. The chain is 5'-nucleotidase SurE from Methanocorpusculum labreanum (strain ATCC 43576 / DSM 4855 / Z).